A 469-amino-acid chain; its full sequence is MTAQTLYDKLWNNHVVREEEDGTVLLYIDRHLVHEVTSPQAFEGLKMAGRKLWRIDSVVSTADHNTPTGDWDKGIQDPISKLQVDILDKNIKEFGALAYFPFMDKGQGIVHVMGPEQGATLPGMTVVCGDSHTSTHGAFGALAHGIGTSEVEHTMATQCITAKKSKSMLIAVDGKLKAGVTAKDVALYIIGQIGTAGGTGYAIEFGGEAIRSLSMEGRMTLCNMAIEAGARSGMVAVDQTTIDYVKDKPFAPKGEAWDKAVEYWRTLVSDEGAVFDKEYRFNAEDIEPQVTWGTSPEMVLDISSKVPNPAEETDPVKRSGMERALEYMGLEAGTPLNEIPVDIVFIGSCTNSRIEDLREAAAIAKDRKKAANVQRVLIVPGSGLVKEQAEKEGLDKIFIEAGFEWREPGCSMCLAMNADRLTPGQRCASTSNRNFEGRQGNGGRTHLVSPAMAAAAAVTGRFTDIRMMA.

3 residues coordinate [4Fe-4S] cluster: C349, C410, and C413.

It belongs to the aconitase/IPM isomerase family. LeuC type 1 subfamily. As to quaternary structure, heterodimer of LeuC and LeuD. It depends on [4Fe-4S] cluster as a cofactor.

It carries out the reaction (2R,3S)-3-isopropylmalate = (2S)-2-isopropylmalate. The protein operates within amino-acid biosynthesis; L-leucine biosynthesis; L-leucine from 3-methyl-2-oxobutanoate: step 2/4. In terms of biological role, catalyzes the isomerization between 2-isopropylmalate and 3-isopropylmalate, via the formation of 2-isopropylmaleate. The chain is 3-isopropylmalate dehydratase large subunit from Neisseria meningitidis serogroup C (strain 053442).